The following is a 227-amino-acid chain: UPF0173 metal-dependent hydrolase Bcer98_3294 (227 aa).

This sequence belongs to the UPF0173 family.

The sequence is that of UPF0173 metal-dependent hydrolase Bcer98_3294 from Bacillus cytotoxicus (strain DSM 22905 / CIP 110041 / 391-98 / NVH 391-98).